The chain runs to 105 residues: UPF0145 protein lpl0253 (105 aa).

Belongs to the UPF0145 family.

This Legionella pneumophila (strain Lens) protein is UPF0145 protein lpl0253.